The primary structure comprises 220 residues: Putative phosphatase YhcW (220 aa).

The active-site Nucleophile is the Asp8. Positions 8, 10, and 166 each coordinate a divalent metal cation. Residue Asp10 is the Proton donor of the active site.

This sequence belongs to the HAD-like hydrolase superfamily. CbbY/CbbZ/Gph/YieH family. The cofactor is a divalent metal cation.

The sequence is that of Putative phosphatase YhcW (yhcW) from Bacillus subtilis (strain 168).